We begin with the raw amino-acid sequence, 90 residues long: Acylphosphatase (90 aa).

Positions 3-89 constitute an Acylphosphatase-like domain; that stretch reads ALKIRVEGIV…EGYEDFTIKY (87 aa). Active-site residues include Arg18 and Asn36.

It belongs to the acylphosphatase family.

It catalyses the reaction an acyl phosphate + H2O = a carboxylate + phosphate + H(+). This is Acylphosphatase (acyP) from Thermotoga maritima (strain ATCC 43589 / DSM 3109 / JCM 10099 / NBRC 100826 / MSB8).